The sequence spans 146 residues: Thyroid hormone-inducible hepatic protein (146 aa).

The disordered stretch occupies residues 83–104 (KVAGSEENGTAETEEVEDESAS). A compositionally biased stretch (acidic residues) spans 94–104 (ETEEVEDESAS).

Belongs to the SPOT14 family. In terms of assembly, homodimer. Heterodimer with MID1IP1. Interacts with THRB and PLAGL1. Mainly expressed in tissues that synthesize triglycerides.

The protein localises to the nucleus. Its subcellular location is the cytoplasm. In terms of biological role, plays a role in the regulation of lipogenesis, especially in lactating mammary gland. Important for the biosynthesis of triglycerides with medium-length fatty acid chains. May modulate lipogenesis by interacting with MID1IP1 and preventing its interaction with ACACA. May function as transcriptional coactivator. May modulate the transcription factor activity of THRB. In Homo sapiens (Human), this protein is Thyroid hormone-inducible hepatic protein (THRSP).